Consider the following 249-residue polypeptide: Acetylglutamate kinase (249 aa).

Substrate contacts are provided by residues 36-37 (GG), Arg58, and Asn147.

The protein belongs to the acetylglutamate kinase family. ArgB subfamily.

Its subcellular location is the cytoplasm. It catalyses the reaction N-acetyl-L-glutamate + ATP = N-acetyl-L-glutamyl 5-phosphate + ADP. Its pathway is amino-acid biosynthesis; L-arginine biosynthesis; N(2)-acetyl-L-ornithine from L-glutamate: step 2/4. In terms of biological role, catalyzes the ATP-dependent phosphorylation of N-acetyl-L-glutamate. The chain is Acetylglutamate kinase from Thermus thermophilus (strain ATCC 27634 / DSM 579 / HB8).